Reading from the N-terminus, the 448-residue chain is N-succinylarginine dihydrolase (448 aa).

Substrate contacts are provided by residues 19 to 28, N110, and 137 to 138; these read AGLSSGNIAS and HR. E174 is an active-site residue. R216 contacts substrate. Residue H252 is part of the active site. D254 and N366 together coordinate substrate. C372 serves as the catalytic Nucleophile.

It belongs to the succinylarginine dihydrolase family. As to quaternary structure, homodimer.

It catalyses the reaction N(2)-succinyl-L-arginine + 2 H2O + 2 H(+) = N(2)-succinyl-L-ornithine + 2 NH4(+) + CO2. It participates in amino-acid degradation; L-arginine degradation via AST pathway; L-glutamate and succinate from L-arginine: step 2/5. In terms of biological role, catalyzes the hydrolysis of N(2)-succinylarginine into N(2)-succinylornithine, ammonia and CO(2). The chain is N-succinylarginine dihydrolase from Legionella pneumophila (strain Corby).